Here is a 170-residue protein sequence, read N- to C-terminus: Adenine phosphoribosyltransferase (170 aa).

The protein belongs to the purine/pyrimidine phosphoribosyltransferase family. In terms of assembly, homodimer.

The protein resides in the cytoplasm. It carries out the reaction AMP + diphosphate = 5-phospho-alpha-D-ribose 1-diphosphate + adenine. The protein operates within purine metabolism; AMP biosynthesis via salvage pathway; AMP from adenine: step 1/1. In terms of biological role, catalyzes a salvage reaction resulting in the formation of AMP, that is energically less costly than de novo synthesis. This chain is Adenine phosphoribosyltransferase, found in Bacillus mycoides (strain KBAB4) (Bacillus weihenstephanensis).